Reading from the N-terminus, the 227-residue chain is Cytidylate kinase (227 aa).

An ATP-binding site is contributed by 10 to 18 (GPASSGKST).

The protein belongs to the cytidylate kinase family. Type 1 subfamily.

Its subcellular location is the cytoplasm. It carries out the reaction CMP + ATP = CDP + ADP. The catalysed reaction is dCMP + ATP = dCDP + ADP. This Streptococcus mutans serotype c (strain ATCC 700610 / UA159) protein is Cytidylate kinase.